A 408-amino-acid polypeptide reads, in one-letter code: 4-O-methyl-glucuronoyl methylesterase 1 (408 aa).

Residues 1–19 (MASSSRFAALLLLALPALA) form the signal peptide. 3 disulfides stabilise this stretch: Cys31-Cys65, Cys218-Cys354, and Cys250-Cys326. The GXSYXG catalytic site motif motif lies at 217 to 222 (GCSRDG). The Nucleophile role is filled by Ser219. Lys223, Gln265, and Glu273 together coordinate substrate. The N-linked (GlcNAc...) asparagine glycan is linked to Asn287. Trp317 is a substrate binding site. An N-linked (GlcNAc...) asparagine glycan is attached at Asn350. His353 (proton donor/acceptor) is an active-site residue. Residues Asn390, Asn395, and Asn401 are each glycosylated (N-linked (GlcNAc...) asparagine).

It belongs to the carbohydrate esterase 15 (CE15) family.

Its subcellular location is the secreted. The enzyme catalyses a 4-O-methyl-alpha-D-glucuronosyl ester derivative + H2O = 4-O-methyl-alpha-D-glucuronate derivative + an alcohol + H(+). Glucuronoyl esterase which may play a significant role in biomass degradation, as it is considered to disconnect hemicellulose from lignin through the hydrolysis of the ester bond between 4-O-methyl-D-glucuronic acid residues of glucuronoxylans and aromatic alcohols of lignin. Can hydrolyze benzyl glucuronic acid (BnGlcA), allyl glucuronic acid (allylGlcA) and to a lower degree methyl glucuronic acid (MeGlcA) in vitro. This chain is 4-O-methyl-glucuronoyl methylesterase 1, found in Wolfiporia cocos (strain MD-104) (Brown rot fungus).